The chain runs to 281 residues: uncharacterized protein (281 aa).

Positions 1 to 23 are cleaved as a signal peptide; it reads MKLYRSLKAALLPGICTSILLAS. Cys-24 is lipidated: N-palmitoyl cysteine. Cys-24 carries the S-diacylglycerol cysteine lipid modification. The interval 145 to 165 is disordered; sequence HHDHNHMHNHEHEHEEHHDEE. A compositionally biased stretch (basic and acidic residues) spans 150-161; the sequence is HMHNHEHEHEEH.

The protein localises to the cell membrane. This is an uncharacterized protein from Mycoplasma genitalium (strain ATCC 33530 / DSM 19775 / NCTC 10195 / G37) (Mycoplasmoides genitalium).